A 122-amino-acid chain; its full sequence is Large ribosomal subunit protein uL14 (122 aa).

It belongs to the universal ribosomal protein uL14 family. Part of the 50S ribosomal subunit. Forms a cluster with proteins L3 and L19. In the 70S ribosome, L14 and L19 interact and together make contacts with the 16S rRNA in bridges B5 and B8.

Functionally, binds to 23S rRNA. Forms part of two intersubunit bridges in the 70S ribosome. In Acidothermus cellulolyticus (strain ATCC 43068 / DSM 8971 / 11B), this protein is Large ribosomal subunit protein uL14.